A 170-amino-acid polypeptide reads, in one-letter code: NADH-dependent flavin reductase StyB (170 aa).

Belongs to the non-flavoprotein flavin reductase family. In terms of assembly, homodimer.

The catalysed reaction is a reduced flavin + NAD(+) = an oxidized flavin + NADH + 2 H(+). Its pathway is aromatic compound metabolism. In terms of biological role, reductase component of a two-component system that catalyzes the first step in the aerobic styrene degradation pathway by enantioselective epoxidation of the vinyl side chain. Utilizes NADH to reduce FAD, which is then transferred to the styrene monooxygenase StyA. The polypeptide is NADH-dependent flavin reductase StyB (styB) (Pseudomonas fluorescens).